The chain runs to 466 residues: MGSMSTPAASANGGQVLLLPFPAAQGHTNPMLQFGRRLAYHGLRPTLVTTRYVLSTTPPPGDPFRVAAISDGFDDASGMAALPDPGEYLRTLEAHGARTLAELLLSEARAGRPARVLVYDPHLPWARRVARAAGVATAAFLSQPCAVDLIYGEVCARRLALPVTPTDARGLYARGVLGVELGPDDVPPFVAAPELTPAFCEQSIEQFAGLEDDDDVLVNSFSDLEPKEAAYMESTWRAKTIGPSLPSFYLDDGRLRSNTAYGFNLFRSTVPCMEWLDKQPPRSVVLVSYGTVSTFDVAKLEELGNGLCNSGKPFLWVVRSNEEHKLSVQLRKKCEKRGLIVPFCPQLEVLAHKATGCFLSHCGWNSTLEAIVNGVPLVAMPHWADQPTISKYVESLWGMGVRVQLDKSGILQREEVERCIREVMDGDRKEDYRRNATRLMKKAKESMQEGGSSDKNIAEFAAKYSN.

His-27 (proton acceptor) is an active-site residue. His-27 is a UDP-alpha-D-glucose binding site. The active-site Charge relay is the Asp-120. Ser-142, Thr-291, Phe-343, Cys-344, His-361, Trp-364, Asn-365, Ser-366, Glu-369, Asp-385, and Gln-386 together coordinate UDP-alpha-D-glucose. UDP is bound by residues Thr-291, Phe-343, Cys-344, and His-361. Positions 365, 366, and 369 each coordinate UDP.

Belongs to the UDP-glycosyltransferase family.

Functionally, involved in the detoxification of the Fusarium mycotoxin deoxynivalenol by the transfer of glucose from UDP-D-glucose to the hydroxyl group at C-3, forming deoxynivalenol-3-O-beta-D-glucoside. The polypeptide is UDP-glycosyltransferase 79 (Oryza sativa subsp. japonica (Rice)).